The primary structure comprises 290 residues: Phosphatidylglycerol--prolipoprotein diacylglyceryl transferase (290 aa).

7 consecutive transmembrane segments (helical) span residues 21–41, 60–80, 98–118, 124–144, 198–218, 224–244, and 258–278; these read VSLH…MWLA, LLYA…VLFY, GGMS…WFAH, FFQV…AGRL, SQLY…NLFI, IGSV…LVEF, and VISM…IMMA. Residue arginine 143 coordinates a 1,2-diacyl-sn-glycero-3-phospho-(1'-sn-glycerol).

This sequence belongs to the Lgt family.

Its subcellular location is the cell inner membrane. The catalysed reaction is L-cysteinyl-[prolipoprotein] + a 1,2-diacyl-sn-glycero-3-phospho-(1'-sn-glycerol) = an S-1,2-diacyl-sn-glyceryl-L-cysteinyl-[prolipoprotein] + sn-glycerol 1-phosphate + H(+). Its pathway is protein modification; lipoprotein biosynthesis (diacylglyceryl transfer). In terms of biological role, catalyzes the transfer of the diacylglyceryl group from phosphatidylglycerol to the sulfhydryl group of the N-terminal cysteine of a prolipoprotein, the first step in the formation of mature lipoproteins. In Sodalis glossinidius (strain morsitans), this protein is Phosphatidylglycerol--prolipoprotein diacylglyceryl transferase.